A 248-amino-acid chain; its full sequence is Octanoyltransferase (248 aa).

The BPL/LPL catalytic domain occupies 53-234 (ADTVDEIWIV…RLIANLDGES (182 aa)). Substrate contacts are provided by residues 93–100 (RGGQITYH), 165–167 (ALG), and 178–180 (GLS). Cys-196 acts as the Acyl-thioester intermediate in catalysis.

The protein belongs to the LipB family.

The protein localises to the cytoplasm. It catalyses the reaction octanoyl-[ACP] + L-lysyl-[protein] = N(6)-octanoyl-L-lysyl-[protein] + holo-[ACP] + H(+). The protein operates within protein modification; protein lipoylation via endogenous pathway; protein N(6)-(lipoyl)lysine from octanoyl-[acyl-carrier-protein]: step 1/2. Catalyzes the transfer of endogenously produced octanoic acid from octanoyl-acyl-carrier-protein onto the lipoyl domains of lipoate-dependent enzymes. Lipoyl-ACP can also act as a substrate although octanoyl-ACP is likely to be the physiological substrate. The polypeptide is Octanoyltransferase (Burkholderia multivorans (strain ATCC 17616 / 249)).